Consider the following 333-residue polypeptide: Tetraacyldisaccharide 4'-kinase (333 aa).

Residue 60-67 participates in ATP binding; it reads TVGGTGKT.

It belongs to the LpxK family.

The catalysed reaction is a lipid A disaccharide + ATP = a lipid IVA + ADP + H(+). It participates in glycolipid biosynthesis; lipid IV(A) biosynthesis; lipid IV(A) from (3R)-3-hydroxytetradecanoyl-[acyl-carrier-protein] and UDP-N-acetyl-alpha-D-glucosamine: step 6/6. Transfers the gamma-phosphate of ATP to the 4'-position of a tetraacyldisaccharide 1-phosphate intermediate (termed DS-1-P) to form tetraacyldisaccharide 1,4'-bis-phosphate (lipid IVA). This chain is Tetraacyldisaccharide 4'-kinase, found in Azotobacter vinelandii (strain DJ / ATCC BAA-1303).